A 371-amino-acid polypeptide reads, in one-letter code: 4-hydroxy-3-methylbut-2-en-1-yl diphosphate synthase (flavodoxin) (371 aa).

4 residues coordinate [4Fe-4S] cluster: Cys270, Cys273, Cys305, and Glu312.

The protein belongs to the IspG family. Requires [4Fe-4S] cluster as cofactor.

The catalysed reaction is (2E)-4-hydroxy-3-methylbut-2-enyl diphosphate + oxidized [flavodoxin] + H2O + 2 H(+) = 2-C-methyl-D-erythritol 2,4-cyclic diphosphate + reduced [flavodoxin]. Its pathway is isoprenoid biosynthesis; isopentenyl diphosphate biosynthesis via DXP pathway; isopentenyl diphosphate from 1-deoxy-D-xylulose 5-phosphate: step 5/6. Functionally, converts 2C-methyl-D-erythritol 2,4-cyclodiphosphate (ME-2,4cPP) into 1-hydroxy-2-methyl-2-(E)-butenyl 4-diphosphate. The chain is 4-hydroxy-3-methylbut-2-en-1-yl diphosphate synthase (flavodoxin) from Chromohalobacter salexigens (strain ATCC BAA-138 / DSM 3043 / CIP 106854 / NCIMB 13768 / 1H11).